The primary structure comprises 365 residues: MAQVINTNYLSLVTQNNLNKSQGTLGSAIERLSSGLRINSAKDDAAGQAIANRFTSNVNGLTQASRNANDGISIAQTTEGALNEINNNLQRIRELTVQAKNGTNSNSDITSIQNEVKNVLDEINRISEQTQFNGVKVLSGEKSEMVIQVGTNDNETIKFNLDKVDNDTLGVASDKLFDTKTEKKGVTAAGAGVTDAKKINAAATLDMMVSLVKEFNLDGKPVTDKFIVTKGGKDYVATKSDFELDATGTKLGLKASATTEFKVDAGKDVKTLNVKDDALATLDKAINTIDESRSKLGAIQNRFESTINNLNNTVNNLSASRSRILDADYATEVSNMSRGQILQQAGTSVLAQANQVPQTVLSLLR.

Belongs to the bacterial flagellin family.

Its subcellular location is the secreted. It localises to the bacterial flagellum. Its function is as follows. Flagellin is the subunit protein which polymerizes to form the filaments of bacterial flagella. The sequence is that of Flagellin 1 (fliC1) from Proteus mirabilis.